A 265-amino-acid polypeptide reads, in one-letter code: Glutamate racemase (265 aa).

Substrate contacts are provided by residues 7 to 8 (DS) and 39 to 40 (YG). The Proton donor/acceptor role is filled by C70. Position 71 to 72 (71 to 72 (NT)) interacts with substrate. C177 functions as the Proton donor/acceptor in the catalytic mechanism.

Belongs to the aspartate/glutamate racemases family.

The catalysed reaction is L-glutamate = D-glutamate. Its pathway is cell wall biogenesis; peptidoglycan biosynthesis. Its function is as follows. Provides the (R)-glutamate required for cell wall biosynthesis. The protein is Glutamate racemase of Prochlorococcus marinus (strain NATL2A).